Here is a 310-residue protein sequence, read N- to C-terminus: Small ribosomal subunit biogenesis GTPase RsgA (310 aa).

The CP-type G domain maps to 77–238 (LSKQSHILAA…IIDTPGIKGF (162 aa)). Residues 126–129 (NKTD) and 180–188 (GNSGVGKST) contribute to the GTP site. 4 residues coordinate Zn(2+): cysteine 262, cysteine 267, histidine 269, and cysteine 275.

Belongs to the TRAFAC class YlqF/YawG GTPase family. RsgA subfamily. In terms of assembly, monomer. Associates with 30S ribosomal subunit, binds 16S rRNA. Requires Zn(2+) as cofactor.

The protein localises to the cytoplasm. Functionally, one of several proteins that assist in the late maturation steps of the functional core of the 30S ribosomal subunit. Helps release RbfA from mature subunits. May play a role in the assembly of ribosomal proteins into the subunit. Circularly permuted GTPase that catalyzes slow GTP hydrolysis, GTPase activity is stimulated by the 30S ribosomal subunit. The chain is Small ribosomal subunit biogenesis GTPase RsgA from Phocaeicola vulgatus (strain ATCC 8482 / DSM 1447 / JCM 5826 / CCUG 4940 / NBRC 14291 / NCTC 11154) (Bacteroides vulgatus).